The primary structure comprises 358 residues: MAPMGIRLSPLGVAVFCLLGLGVLYHLYSGFLAGRFSLFGLGGEPAGGAAGPPAAADGGTVDLREMLAVSVLAAVRGGDEVRRVRESNVLHEKSKGKTREGADDKMTSGDVLSNRKMFYLLKTAFPSVQINTEEHVDAADQEVILWDHKIPEDILKEVTAPKEVPAESVTVWIDPLDATQEYTEDLRKYVTTMVCVAVNGKPVLGVIHKPFSEYTAWAMVDGGSNVKARSSYNEKTPRIVVSRSHSGMVKQVALQTFGNQTTIIPAGGAGYKVLALLDVPDKSQEKADLYIHVTYIKKWDICAGNAILKALGGHMTTLSGEEISYTGSDGIEGGLLASIRMNHQALVRKLPDLEKMGH.

Met-1 carries the post-translational modification N-acetylmethionine. At 1-12 the chain is on the cytoplasmic side; the sequence is MAPMGIRLSPLG. A helical transmembrane segment spans residues 13–33; the sequence is VAVFCLLGLGVLYHLYSGFLA. Residues 34–358 are Lumenal-facing; that stretch reads GRFSLFGLGG…KLPDLEKMGH (325 aa). The segment at 85-106 is disordered; sequence RESNVLHEKSKGKTREGADDKM. Catalysis depends on Asp-110, which acts as the Proton acceptor. Mg(2+) contacts are provided by Glu-133, Asp-174, Leu-176, and Asp-177. Catalysis depends on Thr-179, which acts as the Proton acceptor. The AMP site is built by Ser-242 and His-245. The N-linked (GlcNAc...) asparagine glycan is linked to Asn-259. AMP is bound by residues Gly-268 and Lys-272. Asp-300 lines the Mg(2+) pocket.

It belongs to the inositol monophosphatase superfamily. It depends on Mg(2+) as a cofactor. Contains N-linked glycan resistant to endoglycosydase H.

The protein localises to the golgi apparatus. The protein resides in the trans-Golgi network membrane. It catalyses the reaction adenosine 3',5'-bisphosphate + H2O = AMP + phosphate. It functions in the pathway sulfur metabolism. Strongly inhibited by lithium. Its function is as follows. Exhibits 3'-nucleotidase activity toward adenosine 3',5'-bisphosphate (PAP), namely hydrolyzes adenosine 3',5'-bisphosphate into adenosine 5'-monophosphate (AMP) and a phosphate. May play a role in the formation of skeletal elements derived through endochondral ossification, possibly by clearing adenosine 3',5'-bisphosphate produced by Golgi sulfotransferases during glycosaminoglycan sulfation. Has no activity toward 3'-phosphoadenosine 5'-phosphosulfate (PAPS) or inositol phosphate (IP) substrates including I(1)P, I(1,4)P2, I(1,3,4)P3, I(1,4,5)P3 and I(1,3,4,5)P4. The chain is Golgi-resident adenosine 3',5'-bisphosphate 3'-phosphatase (BPNT2) from Callithrix jacchus (White-tufted-ear marmoset).